Here is a 204-residue protein sequence, read N- to C-terminus: Small ribosomal subunit protein uS4 (204 aa).

One can recognise an S4 RNA-binding domain in the interval 93-156; it reads SRLSSVLYHS…AKIPILIEAE (64 aa).

The protein belongs to the universal ribosomal protein uS4 family. As to quaternary structure, part of the 30S ribosomal subunit. Contacts protein S5. The interaction surface between S4 and S5 is involved in control of translational fidelity.

One of the primary rRNA binding proteins, it binds directly to 16S rRNA where it nucleates assembly of the body of the 30S subunit. In terms of biological role, with S5 and S12 plays an important role in translational accuracy. This Wolbachia pipientis subsp. Culex pipiens (strain wPip) protein is Small ribosomal subunit protein uS4.